The primary structure comprises 195 residues: Imidazoleglycerol-phosphate dehydratase (195 aa).

It belongs to the imidazoleglycerol-phosphate dehydratase family.

Its subcellular location is the cytoplasm. It catalyses the reaction D-erythro-1-(imidazol-4-yl)glycerol 3-phosphate = 3-(imidazol-4-yl)-2-oxopropyl phosphate + H2O. The protein operates within amino-acid biosynthesis; L-histidine biosynthesis; L-histidine from 5-phospho-alpha-D-ribose 1-diphosphate: step 6/9. This is Imidazoleglycerol-phosphate dehydratase from Methylobacterium radiotolerans (strain ATCC 27329 / DSM 1819 / JCM 2831 / NBRC 15690 / NCIMB 10815 / 0-1).